Consider the following 103-residue polypeptide: Large ribosomal subunit protein bL21 (103 aa).

It belongs to the bacterial ribosomal protein bL21 family. As to quaternary structure, part of the 50S ribosomal subunit. Contacts protein L20.

In terms of biological role, this protein binds to 23S rRNA in the presence of protein L20. This Desulforapulum autotrophicum (strain ATCC 43914 / DSM 3382 / VKM B-1955 / HRM2) (Desulfobacterium autotrophicum) protein is Large ribosomal subunit protein bL21.